Here is a 683-residue protein sequence, read N- to C-terminus: Long-chain-fatty-acid--CoA ligase 5 (683 aa).

A helical; Signal-anchor for type III membrane protein transmembrane segment spans residues 12-32 (LPTPALICLLTFGTAIFLWLI). Residues 33 to 683 (NRPQPVLPLI…IKSLYESIEE (651 aa)) are Cytoplasmic-facing. Lys361 bears the N6-acetyllysine mark.

The protein belongs to the ATP-dependent AMP-binding enzyme family. As to expression, expressed most abundantly in the small intestine, and to a much lesser extent in the lung, liver, adrenal gland, adipose tissue and kidney.

The protein localises to the mitochondrion. The protein resides in the endoplasmic reticulum. Its subcellular location is the mitochondrion outer membrane. It is found in the endoplasmic reticulum membrane. It localises to the cell membrane. The catalysed reaction is a long-chain fatty acid + ATP + CoA = a long-chain fatty acyl-CoA + AMP + diphosphate. The enzyme catalyses (5Z,8Z,11Z,14Z)-eicosatetraenoate + ATP + CoA = (5Z,8Z,11Z,14Z)-eicosatetraenoyl-CoA + AMP + diphosphate. It carries out the reaction 15-hydroxy-(5Z,8Z,11Z,13E)-eicosatetraenoate + ATP + CoA = 15-hydroxy-(5Z,8Z,11Z,13E)-eicosatetraenoyl-CoA + AMP + diphosphate. It catalyses the reaction 12-hydroxy-(5Z,8Z,10E,14Z)-eicosatetraenoate + ATP + CoA = 12-hydroxy-(5Z,8Z,10E,14Z)-eicosatetraenoyl-CoA + AMP + diphosphate. The catalysed reaction is 5-hydroxy-(6E,8Z,11Z,14Z)-eicosatetraenoate + ATP + CoA = 5-hydroxy-(6E,8Z,11Z,14Z)-eicosatetraenoyl-CoA + AMP + diphosphate. The enzyme catalyses 14,15-epoxy-(5Z,8Z,11Z)-eicosatrienoate + ATP + CoA = 14,15-epoxy-(5Z,8Z,11Z)-eicosatrienoyl-CoA + AMP + diphosphate. It carries out the reaction 11,12-epoxy-(5Z,8Z,14Z)-eicosatrienoate + ATP + CoA = 11,12-epoxy-(5Z,8Z,14Z)-eicosatrienoyl-CoA + AMP + diphosphate. It catalyses the reaction hexadecanoate + ATP + CoA = hexadecanoyl-CoA + AMP + diphosphate. The catalysed reaction is (E)-hexadec-2-enoate + ATP + CoA = (2E)-hexadecenoyl-CoA + AMP + diphosphate. The enzyme catalyses (9Z)-octadecenoate + ATP + CoA = (9Z)-octadecenoyl-CoA + AMP + diphosphate. Catalyzes the conversion of long-chain fatty acids to their active form acyl-CoAs for both synthesis of cellular lipids, and degradation via beta-oxidation. ACSL5 may sensitize epithelial cells to apoptosis specifically triggered by the death ligand TRAIL at the villus tip of the crypt-villus axis of the small intestine. May have a role in the survival of glioma cells. May activate fatty acids from exogenous sources for the synthesis of triacylglycerol destined for intracellular storage. It was suggested that it may also stimulate fatty acid oxidation. Utilizes a wide range of saturated fatty acids with a preference for C16-C18 unsaturated fatty acids. In Rattus norvegicus (Rat), this protein is Long-chain-fatty-acid--CoA ligase 5.